A 479-amino-acid polypeptide reads, in one-letter code: Alliin lyase (479 aa).

Residues 1–25 (MESYDKVGSNKVPCLLILTCIIMSS) form the signal peptide. Positions 26-34 (FVNNNIVQA) are excised as a propeptide. The EGF-like; atypical domain maps to 47–93 (EAVANINCSGHGRAFLDGILSDGSPKCECNTCYTGADCSEKITGCSA). An N-linked (GlcNAc...) asparagine glycan is attached at asparagine 53. Disulfide bonds link cysteine 54/cysteine 73, cysteine 75/cysteine 84, and cysteine 78/cysteine 91. Position 126–134 (126–134 (YFFNPVSNF)) interacts with chloride. Residues asparagine 180 and asparagine 225 are each glycosylated (N-linked (GlcNAc...) asparagine). Lysine 285 bears the N6-(pyridoxal phosphate)lysine mark. Asparagine 342 and asparagine 362 each carry an N-linked (GlcNAc...) asparagine glycan. Cysteine 402 and cysteine 410 are joined by a disulfide.

It belongs to the alliinase family. Homodimer. Requires pyridoxal 5'-phosphate as cofactor.

Its subcellular location is the vacuole. The enzyme catalyses an S-alkyl-L-cysteine S-oxide = an S-alkyl sulfenate + 2-aminoprop-2-enoate. The protein is Alliin lyase of Allium cepa (Onion).